A 184-amino-acid chain; its full sequence is GTP cyclohydrolase 1 (184 aa).

Zn(2+)-binding residues include cysteine 75, histidine 78, and cysteine 146.

The protein belongs to the GTP cyclohydrolase I family. As to quaternary structure, toroid-shaped homodecamer, composed of two pentamers of five dimers.

It catalyses the reaction GTP + H2O = 7,8-dihydroneopterin 3'-triphosphate + formate + H(+). It participates in cofactor biosynthesis; 7,8-dihydroneopterin triphosphate biosynthesis; 7,8-dihydroneopterin triphosphate from GTP: step 1/1. The chain is GTP cyclohydrolase 1 from Streptococcus pneumoniae serotype 2 (strain D39 / NCTC 7466).